Reading from the N-terminus, the 189-residue chain is dCTP deaminase (189 aa).

Residues 112–117 (KSTYAR), 136–138 (TLE), glutamine 157, tyrosine 171, and glutamine 181 each bind dCTP. Glutamate 138 functions as the Proton donor/acceptor in the catalytic mechanism.

The protein belongs to the dCTP deaminase family. As to quaternary structure, homotrimer.

It catalyses the reaction dCTP + H2O + H(+) = dUTP + NH4(+). It functions in the pathway pyrimidine metabolism; dUMP biosynthesis; dUMP from dCTP (dUTP route): step 1/2. In terms of biological role, catalyzes the deamination of dCTP to dUTP. This is dCTP deaminase from Paraburkholderia xenovorans (strain LB400).